The sequence spans 358 residues: Peptide chain release factor 1 (358 aa).

Gln233 bears the N5-methylglutamine mark.

The protein belongs to the prokaryotic/mitochondrial release factor family. Post-translationally, methylated by PrmC. Methylation increases the termination efficiency of RF1.

It localises to the cytoplasm. Its function is as follows. Peptide chain release factor 1 directs the termination of translation in response to the peptide chain termination codons UAG and UAA. The protein is Peptide chain release factor 1 of Clostridium botulinum (strain Loch Maree / Type A3).